We begin with the raw amino-acid sequence, 189 residues long: Class A basic helix-loop-helix protein 15 (189 aa).

The span at 1-12 shows a compositional bias: basic residues; the sequence is MKTKNRPPRRRA. Disordered regions lie at residues 1-85 and 167-189; these read MKTK…ERER and TEAQPQGHLQRYSTQIHSFREGT. Threonine 25 carries the phosphothreonine modification. The span at 68-85 shows a compositional bias: basic and acidic residues; it reads GRRDSSIQRRLESNERER. A bHLH domain is found at 75 to 127; it reads QRRLESNERERQRMHKLNNAFQALREVIPHVRADKKLSKIETLTLAKNYIKSL.

As to quaternary structure, forms homodimers or heterodimers with TCF3 gene products E12 and E47. These dimers bind to the E-box site, however, heterodimer with MYOD1 does not bind target DNA. Expressed in brain, liver, spleen and skeletal muscle.

It localises to the nucleus. In terms of biological role, plays a role in controlling the transcriptional activity of MYOD1, ensuring that expanding myoblast populations remain undifferentiated. Repression may occur through muscle-specific E-box occupancy by homodimers. May also negatively regulate bHLH-mediated transcription through an N-terminal repressor domain. Serves as a key regulator of acinar cell function, stability, and identity. Also required for normal organelle localization in exocrine cells and for mitochondrial calcium ion transport. May function as a unique regulator of gene expression in several different embryonic and postnatal cell lineages. Binds to the E-box consensus sequence 5'-CANNTG-3'. The protein is Class A basic helix-loop-helix protein 15 (BHLHA15) of Homo sapiens (Human).